The sequence spans 257 residues: Diacetyl reductase [(S)-acetoin forming] (257 aa).

Residue 6–30 (IITGAAGGLGKGIAERLANDGFNIV) coordinates NAD(+). Residue Ser139 coordinates substrate. Tyr152 acts as the Proton acceptor in catalysis. Residue Lys156 is part of the active site.

The protein belongs to the short-chain dehydrogenases/reductases (SDR) family.

It catalyses the reaction (S)-acetoin + NAD(+) = diacetyl + NADH + H(+). In terms of biological role, catalyzes the irreversible reduction of 2,3-butanediol to (S)-acetoin in the presence of NADH. In Staphylococcus epidermidis (strain ATCC 12228 / FDA PCI 1200), this protein is Diacetyl reductase [(S)-acetoin forming] (butA).